A 339-amino-acid polypeptide reads, in one-letter code: Starvation-sensing protein RspB (339 aa).

The Zn(2+) site is built by Cys37, His59, Cys89, Cys92, Cys95, Cys103, and Glu144.

Belongs to the zinc-containing alcohol dehydrogenase family. The cofactor is Zn(2+).

Not known; probable catabolic enzyme. In Escherichia coli (strain K12), this protein is Starvation-sensing protein RspB.